The chain runs to 282 residues: Blarina toxin (282 aa).

The N-terminal stretch at methionine 1–alanine 17 is a signal peptide. A propeptide spans valine 18–arginine 29 (activation peptide). Residues isoleucine 30–lysine 279 enclose the Peptidase S1 domain. Intrachain disulfides connect cysteine 36-cysteine 194, cysteine 57-cysteine 73, cysteine 170-cysteine 240, cysteine 205-cysteine 219, and cysteine 230-cysteine 255. Histidine 72 serves as the catalytic Charge relay system. Serine 100 carries O-linked (GalNAc...) serine glycosylation. N-linked (GlcNAc...) asparagine glycosylation is found at asparagine 109 and asparagine 122. Aspartate 138 (charge relay system) is an active-site residue. Serine 234 functions as the Charge relay system in the catalytic mechanism.

Belongs to the peptidase S1 family. Kallikrein subfamily. In terms of tissue distribution, submaxillary and sublingual salivary glands.

It is found in the secreted. Its activity is regulated as follows. Strongly inhibited by aprotinin, moderately inhibited by secretory leukoprotease inhibitor, the Kunitz-type soybean trypsin inhibitor, and leupeptin, and not inhibited by urinary trypsin inhibitor or alpha-1 protease inhibitor. In terms of biological role, has kallikrein-like activity, converts kininogens to kinins, and has dilatory effects on the blood vessel walls. Shows highest activity toward Pro-Phe-Arg-MCA and Boc-Val-Leu-Lys-MCA in vitro. Has preference for Arg and Lys in position P1 and hydrophobic residues in position P2. In Blarina brevicauda (Northern short-tailed shrew), this protein is Blarina toxin (BTX).